The following is a 219-amino-acid chain: Probable oxidoreductase virH (219 aa).

It belongs to the oxidoreductase OpS7 family.

It participates in secondary metabolite biosynthesis. Probable oxidoreductase; part of the gene cluster that mediates the biosynthesis of virensols and trichoxide, fungal natural products that contain or are derived from a salicylaldehyde core. The pathway begins with the synthesis of the reduced chain in virensol C by the highly reducing polyketide synthase virA via condensation of one acetate and 8 malonate units. VirA has interesting programming rules since the first 2 ketides are fully reduced, the 3 following ketides undergo beta-dehydration, and the last 3 ketides are only reduced to beta-hydroxys to yield the trihydroxy portion. The production of aldehyde virensol C by virA alone is surprising, since virA does not contain a reductase (R) domain that is typically associated with reductive product release in HRPKS. The cupin-domain enzyme virC is involved in enhancing virA product turnover. The short-chain dehydrogenase virB then oxidizes the C-7 alcohol of virensol C to a ketone, yielding virensol D. Virensol D is further transformed to salicylaldehyde 5-deoxyaurocitrin by the short-chain dehydrogenase virD. VirD catalyzes the dehydrogenation of C-3 to form the beta-ketone aldehyde, which is followed by the generation of the nucleophilic C-2 that is required for the intramolecular aldol condensation between C-2 and C-7, itself followed by dehydration and aromatization which leads to salicylaldehyde 5-deoxyaurocitrin. While the dehydrogenation of virensol D is definitely catalyzed by virD, the aldol condensation and dehydration may be uncatalyzed or assisted by virD. The short chain dehydrogenase virG then converts salicylaldehyde 5-deoxyaurocitrin into virensol B which is further hydroxylated by the cytochrome P450 monooxygenase virE to yield the hydroquinone virensol A. VirI then may oxidize virensol A to form the quinone, while virH performs the epoxidation. Finally, the two remaining short-chain dehydrogenases, virK and virL, are probably responsible for reducing the ketones to the corresponding alcohols to furnish the epoxycyclohexanol structure in trichoxide. This is Probable oxidoreductase virH from Hypocrea virens (strain Gv29-8 / FGSC 10586) (Gliocladium virens).